Here is a 369-residue protein sequence, read N- to C-terminus: GDSL esterase/lipase At5g41890 (369 aa).

Ser32 acts as the Nucleophile in catalysis. Residues Asp334 and His337 contribute to the active site.

This sequence belongs to the 'GDSL' lipolytic enzyme family.

This chain is GDSL esterase/lipase At5g41890, found in Arabidopsis thaliana (Mouse-ear cress).